A 460-amino-acid polypeptide reads, in one-letter code: MLKIYNSISRDKQEFKPINPGKIGMYVCGVTIYDLCHIGHGRTFVSFDMIVRYLRYIGYEVNFQRNITDVDDKIIKRAAENNESCESLTERLIAEMHQDFDALNMKRPDFEPRATLHIEEIIDMVQRLLDRDHAYVASNGDVLFSVASFPEYGQLSGQNLDQLQAGARVEIDNAKRNPMDFVLWKMSKPGEPTWESPWGPGRPGWHIECSAMNSKHLGLHFDIHGGGSDLQFPHHENEIAQSCCAHDTPYVNYWMHTGMVMVDREKMSKSLDNFFTIRDVLKHYDAETVRYFLLSGHYRSQLNYSEDNLKQARAALERLYTALKGLDLTVDAAPAEAFVAKFKSAMDDDFNTPEAYSVLFEMVREINRLKTTDMAEASALGVSLKQLADVLGLISQTPEAFFKGEGSDDEVAEIEALIVERNRARTEKDWPAADVARDRLNELGVELEDGGPSGTTWRKK.

C28 contributes to the Zn(2+) binding site. The short motif at 30-40 is the 'HIGH' region element; that stretch reads VTIYDLCHIGH. C209, H234, and E238 together coordinate Zn(2+). A 'KMSKS' region motif is present at residues 266–270; sequence KMSKS. K269 serves as a coordination point for ATP.

The protein belongs to the class-I aminoacyl-tRNA synthetase family. In terms of assembly, monomer. Zn(2+) serves as cofactor.

The protein localises to the cytoplasm. The enzyme catalyses tRNA(Cys) + L-cysteine + ATP = L-cysteinyl-tRNA(Cys) + AMP + diphosphate. This Shewanella frigidimarina (strain NCIMB 400) protein is Cysteine--tRNA ligase.